Here is a 1071-residue protein sequence, read N- to C-terminus: Exportin-1 (1071 aa).

A necessary for HTLV-1 Rex-mediated mRNA export region spans residues 1 to 679 (MPAIMTMLAD…QQATKNVDIL (679 aa)). One can recognise an Importin N-terminal domain in the interval 46-112 (AQEVLTHLKE…KKYVVGLIIK (67 aa)). HEAT repeat units follow at residues 217–240 (QNAP…PLGY), 241–277 (IFET…VSVS), 354–472 (MLLV…YVDT), 515–553 (RFLV…QYPR), 560–597 (KFLK…KCRR), and 602–639 (VQVG…AVGY). Positions 327–450 (CTFLKEHDQL…VREFMKDTDS (124 aa)) are interaction with Ran and nuclear export complex formation. Serine 391 carries the phosphoserine modification. The interval 411 to 414 (PMLF) is necessary for HTLV-1 Rex multimerization. The interval 411–481 (PMLFKVRLLM…TERIMTEKLH (71 aa)) is interaction with RANBP3. N6-acetyllysine is present on lysine 446. Threonine 448 carries the phosphothreonine modification. Serine 450 carries the phosphoserine modification. Tyrosine 454 is modified (phosphotyrosine). Lysine 693 carries the post-translational modification N6-acetyllysine. HEAT repeat units follow at residues 775–813 (NFVP…KLGG), 885–916 (TMRN…SFYQ), 917–954 (TYFC…NLVE), and 1002–1039 (FSLN…EERE). The interaction with HIV-1 Rev stretch occupies residues 800-820 (VLSTMAIIVNKLGGHITAEIP). A Phosphoserine modification is found at serine 1031.

It belongs to the exportin family. As to quaternary structure, found in a U snRNA export complex with PHAX/RNUXA, NCBP1/CBP80, NCBP2/CBP20, RAN, XPO1 and m7G-capped RNA. Component of a nuclear export receptor complex composed of KPNB1, RAN, SNUPN and XPO1. Found in a trimeric export complex with SNUPN, RAN and XPO1. Found in a nuclear export complex with RANBP3 and RAN. Found in a 60S ribosomal subunit export complex with NMD3, RAN, XPO1. Interacts with DDX3X, NMD3, NUP42, NUP88, NUP214, RANBP3 and TERT. Interacts with NEMF (via its N-terminus). Interacts with the monomeric form of BIRC5/survivin deacetylated at 'Lys-129'. Interacts with DTNBP1 and SERTAD2; the interactions translocate DTNBP1 and SERTAD2 out of the nucleus. Interacts with ATF2. Interacts with SLC35G1 and STIM1. Interacts with DCAF8. Interacts with CPEB3. Interacts with HAX1. Interacts with BOK; translocates to the cytoplasm. Interacts with HSP90AB1. Interacts with LRPPRC; interacts with LRPPRC alone and also when LRPPRC is in complex with EIF4E and with EIF4E sensitivity element (4ESE)-containing mRNAs to form an EIF4E-dependent mRNA export complex. In terms of assembly, (Microbial infection) Interacts with HIV-1 Rev. (Microbial infection) Interacts with HTLV-1 Rex. As to quaternary structure, (Microbial infection) Interacts with influenza A nucleoprotein. In terms of assembly, (Microbial infection) Interacts with Epstein-Barr virus protein BMLF1. (Microbial infection) Part of a tetrameric complex composed of CRM1, importin alpha/beta dimer and the Venezuelan equine encephalitis virus (VEEV) capsid; this complex blocks the receptor-mediated transport through the nuclear pore. As to quaternary structure, (Microbial infection) Interacts with SARS-CoV virus protein ORF9b; this interaction mediates protein ORF9b export out of the nucleus. In terms of tissue distribution, expressed in heart, brain, placenta, lung, liver, skeletal muscle, pancreas, spleen, thymus, prostate, testis, ovary, small intestine, colon and peripheral blood leukocytes. Not expressed in the kidney.

The protein localises to the cytoplasm. It is found in the nucleus. It localises to the nucleoplasm. Its subcellular location is the cajal body. The protein resides in the nucleolus. Its function is as follows. Mediates the nuclear export of cellular proteins (cargos) bearing a leucine-rich nuclear export signal (NES) and of RNAs. In the nucleus, in association with RANBP3, binds cooperatively to the NES on its target protein and to the GTPase RAN in its active GTP-bound form (Ran-GTP). Docking of this complex to the nuclear pore complex (NPC) is mediated through binding to nucleoporins. Upon transit of a nuclear export complex into the cytoplasm, disassembling of the complex and hydrolysis of Ran-GTP to Ran-GDP (induced by RANBP1 and RANGAP1, respectively) cause release of the cargo from the export receptor. The directionality of nuclear export is thought to be conferred by an asymmetric distribution of the GTP- and GDP-bound forms of Ran between the cytoplasm and nucleus. Involved in U3 snoRNA transport from Cajal bodies to nucleoli. Binds to late precursor U3 snoRNA bearing a TMG cap. Functionally, (Microbial infection) Mediates the export of unspliced or incompletely spliced RNAs out of the nucleus from different viruses including HIV-1, HTLV-1 and influenza A. Interacts with, and mediates the nuclear export of HIV-1 Rev and HTLV-1 Rex proteins. Involved in HTLV-1 Rex multimerization. The sequence is that of Exportin-1 (XPO1) from Homo sapiens (Human).